Reading from the N-terminus, the 387-residue chain is Patatin-01 (387 aa).

The signal sequence occupies residues 1 to 23 (MATTKSFLILSVMILATTSSTFA). Residues 32–230 (LSIDGGGIKG…TVADPALLSV (199 aa)) enclose the PNPLA domain. The GXGXXG signature appears at 36–41 (GGGIKG). The GXSXG motif lies at 75 to 79 (GTSTG). Ser77 (nucleophile) is an active-site residue. Asn115 carries an N-linked (GlcNAc...) asparagine glycan. The Proton acceptor role is filled by Asp216. A DGA/G motif is present at residues 216 to 218 (DGA). Residues 361–385 (ETYEEALKRFAKLLSDRKKLRANKA) adopt a coiled-coil conformation.

This sequence belongs to the patatin family. As to expression, tuber.

It is found in the vacuole. Its function is as follows. Probable lipolytic acyl hydrolase (LAH), an activity which is thought to be involved in the response of tubers to pathogens. This Solanum tuberosum (Potato) protein is Patatin-01.